A 200-amino-acid chain; its full sequence is Pyridoxal 5'-phosphate synthase subunit PdxT (200 aa).

Residue 52–54 (GES) coordinates L-glutamine. The Nucleophile role is filled by Cys84. Residues Arg116 and 145-146 (IR) contribute to the L-glutamine site. Catalysis depends on charge relay system residues His181 and Glu183.

It belongs to the glutaminase PdxT/SNO family. In the presence of PdxS, forms a dodecamer of heterodimers. Only shows activity in the heterodimer.

It carries out the reaction aldehydo-D-ribose 5-phosphate + D-glyceraldehyde 3-phosphate + L-glutamine = pyridoxal 5'-phosphate + L-glutamate + phosphate + 3 H2O + H(+). The catalysed reaction is L-glutamine + H2O = L-glutamate + NH4(+). The protein operates within cofactor biosynthesis; pyridoxal 5'-phosphate biosynthesis. Catalyzes the hydrolysis of glutamine to glutamate and ammonia as part of the biosynthesis of pyridoxal 5'-phosphate. The resulting ammonia molecule is channeled to the active site of PdxS. The polypeptide is Pyridoxal 5'-phosphate synthase subunit PdxT (Saccharolobus islandicus (strain L.S.2.15 / Lassen #1) (Sulfolobus islandicus)).